A 1007-amino-acid chain; its full sequence is Glutamate receptor ionotropic, delta-2 (1007 aa).

Positions M1–A23 are cleaved as a signal peptide. Positions D24–R345 are interaction with CBLN1 homotrimer. Residues D24–D566 lie on the Extracellular side of the membrane. Intrachain disulfides connect C83-C355, C99-C131, and C298-C310. The N-linked (GlcNAc...) asparagine glycan is linked to N293. N-linked (GlcNAc...) asparagine glycosylation is present at N426. Residues E531, V534, and D535 each coordinate Ca(2+). A helical transmembrane segment spans residues L567–L587. The Cytoplasmic portion of the chain corresponds to N588–G635. The chain crosses the membrane as a helical span at residues A636–L656. The Extracellular segment spans residues T657 to S830. N-linked (GlcNAc...) asparagine glycans are attached at residues N713 and N716. 3 residues coordinate Ca(2+): D753, D755, and S757. A helical membrane pass occupies residues L831–L851. At E852–I1007 the chain is on the cytoplasmic side. S883 is subject to Phosphoserine. T886 bears the Phosphothreonine mark. S890 bears the Phosphoserine mark. Residues D921–P991 form an interaction with AP4M1 region. The PDZ-binding signature appears at T1005–I1007. Residue S1006 is modified to Phosphoserine.

This sequence belongs to the glutamate-gated ion channel (TC 1.A.10.1) family. GRID2 subfamily. In terms of assembly, tetramer; dimer of dimers. Interacts with EML2, MAGI2 (via PDZ domains) and AP4M1. Interacts with BECN1, GOPC, GRID2IP, SHANK1 and SHANK2. Interacts with CBLN2, but not with CBLN4. Interacts with CBLN1 (via C1q domain); the interaction is CBLN1-NRX1 complex formation-dependent; CBLN1-binding is calcium-independent; CBLN1 hexamers anchor GRID2 N-terminal domain dimers to monomeric NRXN1 isoform beta; promotes synaptogenesis and mediates the D-Serine-dependent long term depression signals and AMPA receptor endocytosis. As to expression, expressed selectively in cerebellar Purkinje cells where it is localized in dendritic spines.

It is found in the postsynaptic cell membrane. It carries out the reaction Ca(2+)(in) = Ca(2+)(out). It catalyses the reaction Na(+)(in) = Na(+)(out). In terms of biological role, member of the ionotropic glutamate receptor family, which plays a crucial role in synaptic organization and signal transduction in the central nervous system. Although it shares structural features with ionotropic glutamate receptors, does not bind glutamate as a primary ligand. Promotes synaptogenesis and mediates the D-Serine-dependent long term depression signals and AMPA receptor endocytosis of cerebellar parallel fiber-Purkinje cell (PF-PC) synapses through the NRX1B-CBLN1-GRID2 triad complex. In the presence of neurexins and cerebellins, forms cation-selective channels that are proposed to be gated by glycine and D-serine. However, recent research disputes this ligand-gated cation channel activity. Cation-selective ion channel activity can be triggered by GRM1 in Purkinje cells. The sequence is that of Glutamate receptor ionotropic, delta-2 (Grid2) from Mus musculus (Mouse).